A 446-amino-acid chain; its full sequence is MLLRYLFILFIIIPIKAFALIEVDITRGNLNPLPVAVSPLSIDNKSKENFKKILKQEDLGSEISIVVENNLRQSGLFNPLDKNAFLQEPDVANLKPRFEDWNLIKAQALVTGKVTFVDEKLRVEFRLWDVLAGKEMMALAFTTVPSNWRRVGHIITDKVYERLTGEKGYFDTRIIYVSEEGPKTKRIKKLAIMDQDGFNNKYLTLGNELVLTPRFSPTNQMVTYLSYFRNLPRVYLLDIETGMQEVVGDFPGMTFAPRFSPDGKKIIMSFAKDGNSDIYTMDLENRIVERITNHPSIDTSPSYSPDGKKITFNSDRSGYQQIYVMDSNGKNVKRISFGNGLYGTPVWSPRGDLIAFTKLHKGKFYIGVMRTDGTGERLLTENFYQEAPSWSPNGRVLIFYRETKTNSKGEGFSAKLWSIDLTGYNEKMVETETDASDPSWSSLLSN.

A signal peptide spans 1–19; that stretch reads MLLRYLFILFIIIPIKAFA.

The protein belongs to the TolB family. The Tol-Pal system is composed of five core proteins: the inner membrane proteins TolA, TolQ and TolR, the periplasmic protein TolB and the outer membrane protein Pal. They form a network linking the inner and outer membranes and the peptidoglycan layer.

The protein resides in the periplasm. Part of the Tol-Pal system, which plays a role in outer membrane invagination during cell division and is important for maintaining outer membrane integrity. The protein is Tol-Pal system protein TolB of Pelagibacter ubique (strain HTCC1062).